Here is a 208-residue protein sequence, read N- to C-terminus: FMN-dependent NADH:quinone oxidoreductase 1 (208 aa).

Belongs to the azoreductase type 1 family. Homodimer. FMN serves as cofactor.

The enzyme catalyses 2 a quinone + NADH + H(+) = 2 a 1,4-benzosemiquinone + NAD(+). The catalysed reaction is N,N-dimethyl-1,4-phenylenediamine + anthranilate + 2 NAD(+) = 2-(4-dimethylaminophenyl)diazenylbenzoate + 2 NADH + 2 H(+). In terms of biological role, quinone reductase that provides resistance to thiol-specific stress caused by electrophilic quinones. Its function is as follows. Also exhibits azoreductase activity. Catalyzes the reductive cleavage of the azo bond in aromatic azo compounds to the corresponding amines. This Bacillus thuringiensis subsp. konkukian (strain 97-27) protein is FMN-dependent NADH:quinone oxidoreductase 1.